A 301-amino-acid chain; its full sequence is Protoheme IX farnesyltransferase (301 aa).

9 helical membrane-spanning segments follow: residues 20–42, 55–75, 105–125, 126–146, 150–172, 176–198, 227–247, 249–269, and 280–300; these read FTELVKIGIVNSNTITAFTGMWL, VDVIFFTIVGSALIVAASGAF, ALMVALVLGVVGTIMLFMTTW, QAGVLGVIGVFLYVVVYSLYA, LVSNTVIGSFSGAVPPLIGWFAV, FSMVPIMLFLVMFCWQPPHFYAI, MFFWVILLTILPFFMFDLGIV, VILATLLNIGWLALSVYGFKM, and FIYSLNYMTILFVAMVVISIF.

Belongs to the UbiA prenyltransferase family. Protoheme IX farnesyltransferase subfamily. Interacts with CtaA.

The protein resides in the cell membrane. It catalyses the reaction heme b + (2E,6E)-farnesyl diphosphate + H2O = Fe(II)-heme o + diphosphate. It functions in the pathway porphyrin-containing compound metabolism; heme O biosynthesis; heme O from protoheme: step 1/1. Functionally, converts heme B (protoheme IX) to heme O by substitution of the vinyl group on carbon 2 of heme B porphyrin ring with a hydroxyethyl farnesyl side group. The polypeptide is Protoheme IX farnesyltransferase (Listeria welshimeri serovar 6b (strain ATCC 35897 / DSM 20650 / CCUG 15529 / CIP 8149 / NCTC 11857 / SLCC 5334 / V8)).